The chain runs to 125 residues: uncharacterized protein (125 aa).

This is an uncharacterized protein from Homo sapiens (Human).